Here is a 123-residue protein sequence, read N- to C-terminus: Probable histone H2B 4 (123 aa).

A disordered region spans residues 1 to 30 (MPPKPSAKGAKKAAKTVVAKPKDGKKRRHA). O-linked (GlcNAc) serine glycosylation occurs at S110. K118 is covalently cross-linked (Glycyl lysine isopeptide (Lys-Gly) (interchain with G-Cter in ubiquitin)).

The protein belongs to the histone H2B family. As to quaternary structure, the nucleosome is a histone octamer containing two molecules each of H2A, H2B, H3 and H4 assembled in one H3-H4 heterotetramer and two H2A-H2B heterodimers. The octamer wraps approximately 147 bp of DNA. Post-translationally, monoubiquitination of Lys-118 gives a specific tag for epigenetic transcriptional activation and is also prerequisite for histone H3 'Lys-4' and 'Lys-79' methylation. In terms of processing, glcNAcylation at Ser-110 promotes monoubiquitination of Lys-118. It fluctuates in response to extracellular glucose, and associates with transcribed genes.

It is found in the nucleus. The protein resides in the chromosome. Core component of nucleosome. Nucleosomes wrap and compact DNA into chromatin, limiting DNA accessibility to the cellular machineries which require DNA as a template. Histones thereby play a central role in transcription regulation, DNA repair, DNA replication and chromosomal stability. DNA accessibility is regulated via a complex set of post-translational modifications of histones, also called histone code, and nucleosome remodeling. The polypeptide is Probable histone H2B 4 (his-48) (Caenorhabditis elegans).